The chain runs to 56 residues: Large ribosomal subunit protein bL32 (56 aa).

Positions 1-21 (MAVQQNRKTRSRRGMRRSHDA) are disordered. A compositionally biased stretch (basic residues) spans 7-16 (RKTRSRRGMR).

The protein belongs to the bacterial ribosomal protein bL32 family.

This chain is Large ribosomal subunit protein bL32, found in Vibrio cholerae serotype O1 (strain ATCC 39541 / Classical Ogawa 395 / O395).